We begin with the raw amino-acid sequence, 487 residues long: Vacuolar protein sorting-associated protein 30 (487 aa).

Residues 33 to 129 (PQTLKKSSVP…DNPDAPMGSE (97 aa)) form a disordered region. Over residues 52–62 (QSRKSIYDRVS) the composition is skewed to basic and acidic residues. The span at 81–94 (SSMSFVLLSESQMA) shows a compositional bias: polar residues. The stretch at 152 to 282 (VECTEMLVEG…DSQLLEKLQR (131 aa)) forms a coiled coil. Residues 283-480 (SNVYNDTFCI…LAHASNVTSN (198 aa)) form a BARA region. The segment at 456–481 (WTKACKLTLTCCKFLLAHASNVTSNA) is required for membrane-association, autophagic function during starvation and normal autophagosome morphology.

Belongs to the beclin family. Component of the autophagy-specific VPS34 PI3-kinase complex I; and of the VPS34 PI3-kinase complex II.

The protein resides in the endosome membrane. The protein localises to the vacuole membrane. Its subcellular location is the preautophagosomal structure membrane. In terms of biological role, required for cytoplasm to vacuole transport (Cvt), autophagy, nucleophagy, and mitophagy, as a part of the autophagy-specific VPS34 PI3-kinase complex I. This complex is essential to recruit the ATG8-phosphatidylinositol conjugate and the ATG12-ATG5 conjugate to the pre-autophagosomal structure. Also involved in endosome-to-Golgi retrograde transport as part of the VPS34 PI3-kinase complex II. Autophagy is required for proper vegetative growth, asexual/sexual reproduction, and full virulence. Autophagy is particularly involved in the biosynthesis of deoxynivalenol (DON), an important virulence determinant. This is Vacuolar protein sorting-associated protein 30 from Gibberella zeae (strain ATCC MYA-4620 / CBS 123657 / FGSC 9075 / NRRL 31084 / PH-1) (Wheat head blight fungus).